The following is a 480-amino-acid chain: Uronate isomerase (480 aa).

The protein belongs to the metallo-dependent hydrolases superfamily. Uronate isomerase family.

The catalysed reaction is D-glucuronate = D-fructuronate. It carries out the reaction aldehydo-D-galacturonate = keto-D-tagaturonate. The protein operates within carbohydrate metabolism; pentose and glucuronate interconversion. The sequence is that of Uronate isomerase from Phenylobacterium zucineum (strain HLK1).